The primary structure comprises 136 residues: Large ribosomal subunit protein eL27 (136 aa).

The 32-residue stretch at 5–36 folds into the KOW domain; it reads MKPGKVVLVLRGKYAGRKAVVVKQQDEGVSDR.

This sequence belongs to the eukaryotic ribosomal protein eL27 family. Component of the large ribosomal subunit.

It is found in the cytoplasm. Its subcellular location is the cytosol. The protein localises to the rough endoplasmic reticulum. In terms of biological role, component of the large ribosomal subunit. The sequence is that of Large ribosomal subunit protein eL27 (rpl-27) from Caenorhabditis elegans.